Here is a 144-residue protein sequence, read N- to C-terminus: Large ribosomal subunit protein uL16 (144 aa).

The protein belongs to the universal ribosomal protein uL16 family. As to quaternary structure, part of the 50S ribosomal subunit.

Functionally, binds 23S rRNA and is also seen to make contacts with the A and possibly P site tRNAs. This is Large ribosomal subunit protein uL16 from Clostridium beijerinckii (strain ATCC 51743 / NCIMB 8052) (Clostridium acetobutylicum).